The sequence spans 229 residues: Putative N-acetylmannosamine-6-phosphate 2-epimerase (229 aa).

Belongs to the NanE family.

The enzyme catalyses an N-acyl-D-glucosamine 6-phosphate = an N-acyl-D-mannosamine 6-phosphate. It participates in amino-sugar metabolism; N-acetylneuraminate degradation; D-fructose 6-phosphate from N-acetylneuraminate: step 3/5. In terms of biological role, converts N-acetylmannosamine-6-phosphate (ManNAc-6-P) to N-acetylglucosamine-6-phosphate (GlcNAc-6-P). The sequence is that of Putative N-acetylmannosamine-6-phosphate 2-epimerase from Escherichia coli O7:K1 (strain IAI39 / ExPEC).